The following is a 162-amino-acid chain: 6,7-dimethyl-8-ribityllumazine synthase (162 aa).

Residues Phe22, 56 to 58 (TFE), and 80 to 82 (AVI) each bind 5-amino-6-(D-ribitylamino)uracil. 85 to 86 (GT) lines the (2S)-2-hydroxy-3-oxobutyl phosphate pocket. His88 functions as the Proton donor in the catalytic mechanism. Residue Met113 coordinates 5-amino-6-(D-ribitylamino)uracil. Position 127 (Arg127) interacts with (2S)-2-hydroxy-3-oxobutyl phosphate.

It belongs to the DMRL synthase family.

The catalysed reaction is (2S)-2-hydroxy-3-oxobutyl phosphate + 5-amino-6-(D-ribitylamino)uracil = 6,7-dimethyl-8-(1-D-ribityl)lumazine + phosphate + 2 H2O + H(+). It functions in the pathway cofactor biosynthesis; riboflavin biosynthesis; riboflavin from 2-hydroxy-3-oxobutyl phosphate and 5-amino-6-(D-ribitylamino)uracil: step 1/2. Catalyzes the formation of 6,7-dimethyl-8-ribityllumazine by condensation of 5-amino-6-(D-ribitylamino)uracil with 3,4-dihydroxy-2-butanone 4-phosphate. This is the penultimate step in the biosynthesis of riboflavin. The chain is 6,7-dimethyl-8-ribityllumazine synthase from Anaeromyxobacter dehalogenans (strain 2CP-C).